The chain runs to 174 residues: Crossover junction endodeoxyribonuclease RuvC (174 aa).

Active-site residues include Asp-8, Glu-67, and Asp-139. Mg(2+) is bound by residues Asp-8, Glu-67, and Asp-139.

The protein belongs to the RuvC family. As to quaternary structure, homodimer which binds Holliday junction (HJ) DNA. The HJ becomes 2-fold symmetrical on binding to RuvC with unstacked arms; it has a different conformation from HJ DNA in complex with RuvA. In the full resolvosome a probable DNA-RuvA(4)-RuvB(12)-RuvC(2) complex forms which resolves the HJ. Mg(2+) is required as a cofactor.

The protein localises to the cytoplasm. The catalysed reaction is Endonucleolytic cleavage at a junction such as a reciprocal single-stranded crossover between two homologous DNA duplexes (Holliday junction).. Functionally, the RuvA-RuvB-RuvC complex processes Holliday junction (HJ) DNA during genetic recombination and DNA repair. Endonuclease that resolves HJ intermediates. Cleaves cruciform DNA by making single-stranded nicks across the HJ at symmetrical positions within the homologous arms, yielding a 5'-phosphate and a 3'-hydroxyl group; requires a central core of homology in the junction. The consensus cleavage sequence is 5'-(A/T)TT(C/G)-3'. Cleavage occurs on the 3'-side of the TT dinucleotide at the point of strand exchange. HJ branch migration catalyzed by RuvA-RuvB allows RuvC to scan DNA until it finds its consensus sequence, where it cleaves and resolves the cruciform DNA. In Pseudomonas aeruginosa (strain LESB58), this protein is Crossover junction endodeoxyribonuclease RuvC.